The primary structure comprises 39 residues: Photosystem II reaction center protein Psb30 (39 aa).

The helical transmembrane segment at 12-32 threads the bilayer; that stretch reads IFQLTFVGLIVIAGPIVIAVL.

Belongs to the Psb30/Ycf12 family. As to quaternary structure, PSII is composed of 1 copy each of membrane proteins PsbA, PsbB, PsbC, PsbD, PsbE, PsbF, PsbH, PsbI, PsbJ, PsbK, PsbL, PsbM, PsbT, PsbX, PsbY, PsbZ, Psb30/Ycf12, peripheral proteins PsbO, CyanoQ (PsbQ), PsbU, PsbV and a large number of cofactors. It forms dimeric complexes.

It localises to the cellular thylakoid membrane. Its function is as follows. A core subunit of photosystem II (PSII), probably helps stabilize the reaction center. The chain is Photosystem II reaction center protein Psb30 from Crocosphaera subtropica (strain ATCC 51142 / BH68) (Cyanothece sp. (strain ATCC 51142)).